Consider the following 913-residue polypeptide: MRTGSRLLLVLLVWGSAAALNGDLTVRPTCKPGFSEEDYTAFVSQNIMEGQKLLKVKFNNCAGNKGVRYETNSLDFKVRADGTMYAVHQVQMASKQLILMVTAWDPQTLGRWEAIVRFLVGEKLQHNGHKPKGRKSGPVDLAQQQSDTLLPWRQHQSAKGLRRQKRDWVIPPINVPENSRGPFPQQLVRIRSDKDKEIHIRYSITGVGADQPPMEVFSIDPVSGRMYVTRPMDREERASYHLRAHAVDMNGNKVENPIDLYIYVIDMNDNRPEFINQVYNGSVDEGSKPGTYVMTVTANDADDSTTANGMVRYRIVTQTPQSPSQNMFTINSETGDIVTVAAGLDREKVQQYMVIVQATDMEGNLNYGLSNTATAIITVTDVNDNPPEFTTSTYSGEVPENRVEVVVANLTVMDRDQPHSPNWNAIYRIISGDPSGHFTIRTDPVTNEGMVTVVKAVDYEMNRAFMLTVMVSNQAPLASGIQMSFQSTAGVTISVTDVNEAPYFPTNHKLIRLEEGVPTGTVLTTFSAVDPDRFMQQAVRYSKLSDPANWLNINATNGQITTAAVLDRESDYIKNNVYEATFLAADNGIPPASGTGTLQIYLIDINDNAPELLPKEAQICEKPNLNVINITAADADIDPNVGPFVFELPSVPSAVRKNWTITRLNGDYAQLSLRIMYLEAGVYDVPIIVTDSGNPPLYNTSIIKVKVCPCDENGDCTTIGAVAAAGLGTGAIIAILICIIILLTMVLLFVVWMKRREKERHTKQLLIDPEDDVRDNILKYDEEGGGEEDQDYDLSQLQQPETMDHVLNKAPGVRRVDERPIGAEPQYPIRPVIPHPGDIGDFINEGLRAADNDPTAPPYDSLLVFDYEGSGSTAGSVSSLNSSSSGDQDYDYLNDWGPRFKKLADMYGGGEED.

The first 19 residues, 1 to 19, serve as a signal peptide directing secretion; sequence MRTGSRLLLVLLVWGSAAA. A propeptide spanning residues 20–166 is cleaved from the precursor; the sequence is LNGDLTVRPT…SAKGLRRQKR (147 aa). Cadherin domains lie at 167–274, 275–389, 390–504, 505–610, and 611–721; these read DWVI…RPEF, INQV…PPEF, TTST…APYF, PTNH…DNAP, and ELLP…TIGA. The Extracellular segment spans residues 167-731; the sequence is DWVIPPINVP…VAAAGLGTGA (565 aa). 6 N-linked (GlcNAc...) asparagine glycosylation sites follow: asparagine 280, asparagine 409, asparagine 554, asparagine 629, asparagine 658, and asparagine 699. The helical transmembrane segment at 732–753 threads the bilayer; the sequence is IIAILICIIILLTMVLLFVVWM. Topologically, residues 754–913 are cytoplasmic; the sequence is KRREKERHTK…ADMYGGGEED (160 aa).

As to expression, embryonic brain and neuronal retina.

It localises to the cell membrane. Cadherins are calcium-dependent cell adhesion proteins. They preferentially interact with themselves in a homophilic manner in connecting cells; cadherins may thus contribute to the sorting of heterogeneous cell types. May play an important role in retinal development. In Gallus gallus (Chicken), this protein is Cadherin-4 (CDH4).